We begin with the raw amino-acid sequence, 284 residues long: Tropomyosin (284 aa).

Residues 1–47 (MDAIKKKMQAMKIEKDNAMDRADAAEEKARQQQERVEKLEEELRDTQ) form a disordered region. Positions 1 to 284 (MDAIKKKMQA…DQTFQELSGY (284 aa)) form a coiled coil. The span at 12 to 38 (KIEKDNAMDRADAAEEKARQQQERVEK) shows a compositional bias: basic and acidic residues.

This sequence belongs to the tropomyosin family.

In terms of biological role, tropomyosin, in association with the troponin complex, plays a central role in the calcium dependent regulation of muscle contraction. The protein is Tropomyosin of Trichinella spiralis (Trichina worm).